Reading from the N-terminus, the 268-residue chain is 4-hydroxy-tetrahydrodipicolinate reductase (268 aa).

Residues 9 to 14, 99 to 101, and 123 to 126 contribute to the NAD(+) site; these read GAAGRM, GTT, and ASNF. The Proton donor/acceptor role is filled by histidine 156. Histidine 157 contacts (S)-2,3,4,5-tetrahydrodipicolinate. The active-site Proton donor is the lysine 160. 166-167 serves as a coordination point for (S)-2,3,4,5-tetrahydrodipicolinate; that stretch reads GT.

Belongs to the DapB family.

It localises to the cytoplasm. It carries out the reaction (S)-2,3,4,5-tetrahydrodipicolinate + NAD(+) + H2O = (2S,4S)-4-hydroxy-2,3,4,5-tetrahydrodipicolinate + NADH + H(+). The enzyme catalyses (S)-2,3,4,5-tetrahydrodipicolinate + NADP(+) + H2O = (2S,4S)-4-hydroxy-2,3,4,5-tetrahydrodipicolinate + NADPH + H(+). The protein operates within amino-acid biosynthesis; L-lysine biosynthesis via DAP pathway; (S)-tetrahydrodipicolinate from L-aspartate: step 4/4. In terms of biological role, catalyzes the conversion of 4-hydroxy-tetrahydrodipicolinate (HTPA) to tetrahydrodipicolinate. In Saccharophagus degradans (strain 2-40 / ATCC 43961 / DSM 17024), this protein is 4-hydroxy-tetrahydrodipicolinate reductase.